The following is a 490-amino-acid chain: ATP synthase subunit beta, chloroplastic (490 aa).

170 to 177 contacts ATP; the sequence is GGAGVGKT.

It belongs to the ATPase alpha/beta chains family. F-type ATPases have 2 components, CF(1) - the catalytic core - and CF(0) - the membrane proton channel. CF(1) has five subunits: alpha(3), beta(3), gamma(1), delta(1), epsilon(1). CF(0) has four main subunits: a(1), b(1), b'(1) and c(9-12).

It localises to the plastid. The protein resides in the chloroplast thylakoid membrane. The enzyme catalyses ATP + H2O + 4 H(+)(in) = ADP + phosphate + 5 H(+)(out). Its function is as follows. Produces ATP from ADP in the presence of a proton gradient across the membrane. The catalytic sites are hosted primarily by the beta subunits. The chain is ATP synthase subunit beta, chloroplastic from Ipomoea aquatica (Water spinach).